The primary structure comprises 828 residues: Glycerol-3-phosphate acyltransferase (828 aa).

An HXXXXD motif motif is present at residues 310-315; that stretch reads HRSHID.

It belongs to the GPAT/DAPAT family.

It is found in the cell inner membrane. The catalysed reaction is sn-glycerol 3-phosphate + an acyl-CoA = a 1-acyl-sn-glycero-3-phosphate + CoA. The protein operates within phospholipid metabolism; CDP-diacylglycerol biosynthesis; CDP-diacylglycerol from sn-glycerol 3-phosphate: step 1/3. The sequence is that of Glycerol-3-phosphate acyltransferase from Pseudomonas putida (strain ATCC 47054 / DSM 6125 / CFBP 8728 / NCIMB 11950 / KT2440).